The following is a 592-amino-acid chain: MSNADAPSRKFSSSIIGIDLGTTNSCVSVIKDGKPVIIENQEGERTTPSVVSILKDEVVVGTQARNRILMHPRNTIFASKRLIGRKFGDPEVEKYVKGLPFDTMSHCNGDVWIRVDGKKYSPAQIGAFVLSKLKSSAEAFLSHPVARSVITVPAYFNDSQRQATKDAGRIAGLDVVRVINEPTAAALAYGLDKSARGNIAVYDLGGGTFDISILEVEDGVFHVKATNGDTFLGGEDLDNEVVKFIVEDFKQKEGIDLSNDVDALGRIKEGAEKIKKELSVSCTSKMEIPYICNSQGGPKHLCREITRSEFEQIAKKIVERTIAPCKRALADAGLDSSDIKHVILVGGMTRMPYVRRVVKEIFGIEPSTDINPDEAVANGAALQGGVLMGEIDDVLLLDVAPLSLGIELLGGVFSRVIRRNTTIPFKETQVFSTSEDNQTEVDIKVYQGERSMVADNKYLGQIKLKSIPPLPRGVPRIEVTFESDANGIYRVTAQDSITKEPQSLEIIPSSGLTEAEVERMVEESERLRHLDEMKRRKAELIVSSSELLRRPPTELERIPKNYLDRLGKVVKGEDFDLKEMEEVLLSAKKSMS.

It belongs to the heat shock protein 70 family.

It localises to the nucleus. Its function is as follows. May act as a chaperone. The sequence is that of Mitochondrial-type heat shock protein 70 (HSP70) from Encephalitozoon cuniculi (strain GB-M1) (Microsporidian parasite).